The chain runs to 331 residues: Aldo-keto reductase family 7 member A3 (331 aa).

Phosphoserine is present on Ser-6. Residues Met-17, Asp-44, and Tyr-49 each contribute to the NADPH site. Tyr-49 (proton donor) is an active-site residue. The residue at position 85 (Ser-85) is a Phosphoserine. 9 residues coordinate NADPH: His-113, Ser-143, Asn-144, Asn-198, Leu-200, Gly-202, Lys-208, Tyr-209, and Arg-222. Position 227 is a phosphothreonine (Thr-227). NADPH contacts are provided by Ser-290, Gln-294, and Asn-298.

The protein belongs to the aldo/keto reductase family. Aldo/keto reductase 2 subfamily. In terms of assembly, homodimer. Expressed in colon, kidney, liver, pancreas, adenocarcinoma and endometrium.

It is found in the cytoplasm. The enzyme catalyses a primary alcohol + NADP(+) = an aldehyde + NADPH + H(+). It carries out the reaction aflatoxin B1 dialdehyde + NADPH + H(+) = aflatoxin B1 C(6a)-monoaldehyde + NADP(+). The catalysed reaction is aflatoxin B1 dialdehyde + NADPH + H(+) = aflatoxin B1 C(8)-monoaldehyde + NADP(+). It catalyses the reaction aflatoxin B1 C(6a)-monoaldehyde + NADPH + 2 H(+) = aflatoxin B1 triol + NADP(+). With respect to regulation, inhibited by citrate. Functionally, catalyzes the NADPH-dependent reduction of various carbonyl-containing compounds, including aldehydes, ketones, and toxic products from cellular metabolism or environmental exposure. Can reduce the dialdehyde form of aflatoxin B1 (AFB1) into alcohol derivatives, via monoaldehydes intermediates. Can reduce the dialdehyde form of aflatoxin B1 (AFB1) into alcohol derivatives, via monoaldehydes intermediates, thus preventing the formation of protein adducts that contribute to AFB1-induced toxicity. The chain is Aldo-keto reductase family 7 member A3 from Homo sapiens (Human).